The following is a 152-amino-acid chain: Small ribosomal subunit protein uS8m (152 aa).

The protein belongs to the universal ribosomal protein uS8 family.

It is found in the mitochondrion. The sequence is that of Small ribosomal subunit protein uS8m (mrps8) from Dictyostelium citrinum (Slime mold).